The chain runs to 493 residues: Ecdysteroid UDP-glucosyltransferase (493 aa).

The signal sequence occupies residues 1 to 17 (MIFILLTTLLAVGGAQT).

The protein belongs to the UDP-glycosyltransferase family.

In terms of biological role, catalyzes the transfer of glucose from UDP-glucose to ecdysteroids which are insect molting hormones. Expression of egt interferes with normal insect development and block molting. This chain is Ecdysteroid UDP-glucosyltransferase (egt), found in Choristoneura fumiferana defective polyhedrosis virus (Cfdef).